The primary structure comprises 383 residues: MRKIQRITQFSDDNNRSQREHIPLDLIVEIVSSLPAKSIVRFRSVSKLWSSIITTPDFTSSVVTRSLSSRPCVLLIFQKHDKLFFFASPVHQKKTCPNVENFQYTIPNNGKLQRCESVHGLIYLETSTNVMFIRNPITKSFFTLPKLDSKEGRPLTGFLGYDPINGKYKVLCILKERNKIGILTLGAQESWRILSKGFLSHYKVTGYAKCIDGVIYYEGSFGDGLRQELAIMSFDLRSEKFSLIKHPKKSSIATCWSSYEGRLALVSSIASGVSLWILEDADNHKQWIYKHFPSHREFIKERWKLKGVTRTGEFIYTSYRAYVLNVEGRVLYQWFRILYVDPKRNSMRVVMHGGIAVDDIRRLDEVGYDLMKDLTVIPNHIQI.

Residues 16 to 67 (RSQREHIPLDLIVEIVSSLPAKSIVRFRSVSKLWSSIITTPDFTSSVVTRSL) form the F-box domain.

The chain is Putative F-box protein At4g09190 from Arabidopsis thaliana (Mouse-ear cress).